A 461-amino-acid polypeptide reads, in one-letter code: Photosystem II CP43 reaction center protein (461 aa).

5 consecutive transmembrane segments (helical) span residues 57 to 81 (LFEV…SHLA), 122 to 143 (LRGP…KDKN), 166 to 188 (KAMF…RIIS), 243 to 263 (KPFG…LSYS), and 279 to 300 (WYNN…ASQS). A [CaMn4O5] cluster-binding site is contributed by Glu355. A helical membrane pass occupies residues 435–459 (RARAAAAGFEKGIDRATEPVLAMRD).

Belongs to the PsbB/PsbC family. PsbC subfamily. In terms of assembly, PSII is composed of 1 copy each of membrane proteins PsbA, PsbB, PsbC, PsbD, PsbE, PsbF, PsbH, PsbI, PsbJ, PsbK, PsbL, PsbM, PsbT, PsbX, PsbY, PsbZ, Psb30/Ycf12, peripheral proteins PsbO, CyanoQ (PsbQ), PsbU, PsbV and a large number of cofactors. It forms dimeric complexes. Requires Binds multiple chlorophylls and provides some of the ligands for the Ca-4Mn-5O cluster of the oxygen-evolving complex. It may also provide a ligand for a Cl- that is required for oxygen evolution. PSII binds additional chlorophylls, carotenoids and specific lipids. as cofactor.

Its subcellular location is the cellular thylakoid membrane. In terms of biological role, one of the components of the core complex of photosystem II (PSII). It binds chlorophyll and helps catalyze the primary light-induced photochemical processes of PSII. PSII is a light-driven water:plastoquinone oxidoreductase, using light energy to abstract electrons from H(2)O, generating O(2) and a proton gradient subsequently used for ATP formation. The chain is Photosystem II CP43 reaction center protein from Synechococcus elongatus (strain ATCC 33912 / PCC 7942 / FACHB-805) (Anacystis nidulans R2).